Consider the following 331-residue polypeptide: tRNA U34 carboxymethyltransferase (331 aa).

Carboxy-S-adenosyl-L-methionine contacts are provided by residues lysine 91, tryptophan 105, lysine 110, glycine 130, 152 to 154 (DPS), 181 to 182 (IE), methionine 196, tyrosine 200, and arginine 315.

Belongs to the class I-like SAM-binding methyltransferase superfamily. CmoB family. As to quaternary structure, homotetramer.

It catalyses the reaction carboxy-S-adenosyl-L-methionine + 5-hydroxyuridine(34) in tRNA = 5-carboxymethoxyuridine(34) in tRNA + S-adenosyl-L-homocysteine + H(+). Its function is as follows. Catalyzes carboxymethyl transfer from carboxy-S-adenosyl-L-methionine (Cx-SAM) to 5-hydroxyuridine (ho5U) to form 5-carboxymethoxyuridine (cmo5U) at position 34 in tRNAs. The protein is tRNA U34 carboxymethyltransferase of Shewanella baltica (strain OS155 / ATCC BAA-1091).